The following is a 266-amino-acid chain: Cytosolic Fe-S cluster assembly factor Nubp2 homolog (266 aa).

14-21 (GKGGVGKS) is an ATP binding site. [4Fe-4S] cluster is bound by residues Cys-188 and Cys-191.

It belongs to the Mrp/NBP35 ATP-binding proteins family. Nubp2/CFD1 subfamily. Heterotetramer of 2 Nubp1 and 2 Nubp2 chains. [4Fe-4S] cluster serves as cofactor.

It is found in the cytoplasm. Its function is as follows. Component of the cytosolic iron-sulfur (Fe/S) protein assembly (CIA) machinery. Required for maturation of extramitochondrial Fe-S proteins. The Nubp1-Nubp2 heterotetramer forms a Fe-S scaffold complex, mediating the de novo assembly of an Fe-S cluster and its transfer to target apoproteins. This is Cytosolic Fe-S cluster assembly factor Nubp2 homolog from Drosophila virilis (Fruit fly).